We begin with the raw amino-acid sequence, 177 residues long: Thioredoxin M-type, chloroplastic (177 aa).

The transit peptide at 1–64 (MAAFTCTSSP…SRLRRGGIIC (64 aa)) directs the protein to the chloroplast. In terms of domain architecture, Thioredoxin spans 65–177 (EAQDTATGIP…LATSIDKFLQ (113 aa)). Catalysis depends on nucleophile residues cysteine 101 and cysteine 104. An intrachain disulfide couples cysteine 101 to cysteine 104.

It belongs to the thioredoxin family. Plant M-type subfamily. Forms a complex with heterodimeric ferredoxin-thioredoxin reductase (FTR) and ferredoxin.

The protein localises to the plastid. The protein resides in the chloroplast. Functionally, participates in various redox reactions through the reversible oxidation of the active center dithiol to a disulfide. The M form is known to activate NADP-malate dehydrogenase. This Brassica napus (Rape) protein is Thioredoxin M-type, chloroplastic.